A 249-amino-acid chain; its full sequence is Cytoplasmic envelopment protein 1 (249 aa).

The protein belongs to the herpesviridae cytoplasmic envelopment protein 1 family.

Its subcellular location is the virion. It is found in the virion tegument. The protein resides in the host cytoplasm. It localises to the host Golgi apparatus. Its function is as follows. Plays a critical role in cytoplasmic virus egress. Participates in the final step of tegumentation and envelope acquisition within the host cytoplasm. This chain is Cytoplasmic envelopment protein 1 (U75), found in Homo sapiens (Human).